The primary structure comprises 529 residues: Peptide chain release factor 3 (529 aa).

A tr-type G domain is found at Ala11–Met280. Residues Ser20–Thr27, Asp88–His92, and Asn142–Asp145 each bind GTP.

It belongs to the TRAFAC class translation factor GTPase superfamily. Classic translation factor GTPase family. PrfC subfamily.

It is found in the cytoplasm. Increases the formation of ribosomal termination complexes and stimulates activities of RF-1 and RF-2. It binds guanine nucleotides and has strong preference for UGA stop codons. It may interact directly with the ribosome. The stimulation of RF-1 and RF-2 is significantly reduced by GTP and GDP, but not by GMP. This chain is Peptide chain release factor 3, found in Edwardsiella ictaluri (strain 93-146).